The primary structure comprises 648 residues: Probable potassium transport system protein Kup 1 (648 aa).

The next 12 helical transmembrane spans lie at 25–45, 57–77, 113–133, 153–173, 184–204, 219–239, 263–283, 312–332, 362–382, 391–411, 417–437, and 446–466; these read LTLGALGVVFGDIGTSPIYAF, IVAGEILGVLSLALWALILVV, LVMALGAIGAALFYGDGVITP, SVSRGEILLITSAILIGLFLM, LFGPVCLVWFVTIGGIGLIHI, GVLFMANHGVAGMFVMGAVFL, WLAIVFPALALNYLGQGAFAL, IPLVILATCATVIASQAVITG, IYLPTITMLLFVGVMVLVLGF, AYGVSVSGTMVVTTCLAFLVV, WGWPLTVAVIVPLLLLDLFFF, and EGGWVPLIVAGGVGLLIVTWV.

Belongs to the HAK/KUP transporter (TC 2.A.72) family.

It is found in the cell inner membrane. The catalysed reaction is K(+)(in) + H(+)(in) = K(+)(out) + H(+)(out). Functionally, transport of potassium into the cell. Likely operates as a K(+):H(+) symporter. In Rhizorhabdus wittichii (strain DSM 6014 / CCUG 31198 / JCM 15750 / NBRC 105917 / EY 4224 / RW1) (Sphingomonas wittichii), this protein is Probable potassium transport system protein Kup 1.